The chain runs to 463 residues: Glycine--tRNA ligase (463 aa).

R98 and E174 together coordinate substrate. Residues 206–208, 216–221, 290–291, and 334–337 contribute to the ATP site; these read RNE, FRTREF, EL, and GADR. 221 to 225 provides a ligand contact to substrate; sequence FEQME. Substrate is bound at residue 330 to 334; it reads EPSLG.

It belongs to the class-II aminoacyl-tRNA synthetase family. In terms of assembly, homodimer.

It is found in the cytoplasm. The enzyme catalyses tRNA(Gly) + glycine + ATP = glycyl-tRNA(Gly) + AMP + diphosphate. Its function is as follows. Catalyzes the attachment of glycine to tRNA(Gly). The sequence is that of Glycine--tRNA ligase from Staphylococcus saprophyticus subsp. saprophyticus (strain ATCC 15305 / DSM 20229 / NCIMB 8711 / NCTC 7292 / S-41).